Here is a 272-residue protein sequence, read N- to C-terminus: 3-methyl-2-oxobutanoate hydroxymethyltransferase (272 aa).

Residues Asp-43 and Asp-82 each contribute to the Mg(2+) site. 3-methyl-2-oxobutanoate contacts are provided by residues 43–44 (DS), Asp-82, and Lys-112. A Mg(2+)-binding site is contributed by Glu-114. Residue Glu-179 is the Proton acceptor of the active site.

Belongs to the PanB family. In terms of assembly, homodecamer; pentamer of dimers. It depends on Mg(2+) as a cofactor.

Its subcellular location is the cytoplasm. It catalyses the reaction 3-methyl-2-oxobutanoate + (6R)-5,10-methylene-5,6,7,8-tetrahydrofolate + H2O = 2-dehydropantoate + (6S)-5,6,7,8-tetrahydrofolate. The protein operates within cofactor biosynthesis; (R)-pantothenate biosynthesis; (R)-pantoate from 3-methyl-2-oxobutanoate: step 1/2. In terms of biological role, catalyzes the reversible reaction in which hydroxymethyl group from 5,10-methylenetetrahydrofolate is transferred onto alpha-ketoisovalerate to form ketopantoate. The protein is 3-methyl-2-oxobutanoate hydroxymethyltransferase of Staphylococcus aureus (strain Mu3 / ATCC 700698).